A 542-amino-acid chain; its full sequence is uncharacterized protein (542 aa).

Residues 125 to 138 (ANSNSSSTGRDSTP) show a composition bias toward low complexity. Disordered stretches follow at residues 125–182 (ANSN…NHHN), 194–333 (LPPT…CSSS), 390–428 (SSST…YSSI), and 459–487 (SSSS…PSCN). Positions 202–213 (QKPSFLSNSNQI) are enriched in polar residues. Composition is skewed to low complexity over residues 228–306 (SYTS…NSNN), 314–333 (NKLS…CSSS), 390–423 (SSST…TSTN), and 459–479 (SSSS…GGNS).

This is an uncharacterized protein from Dictyostelium discoideum (Social amoeba).